A 64-amino-acid polypeptide reads, in one-letter code: Translational regulator CsrA (64 aa).

Belongs to the CsrA/RsmA family. In terms of assembly, homodimer; the beta-strands of each monomer intercalate to form a hydrophobic core, while the alpha-helices form wings that extend away from the core.

It is found in the cytoplasm. Its function is as follows. A key translational regulator that binds mRNA to regulate translation initiation and/or mRNA stability. Mediates global changes in gene expression, shifting from rapid growth to stress survival by linking envelope stress, the stringent response and the catabolite repression systems. Usually binds in the 5'-UTR; binding at or near the Shine-Dalgarno sequence prevents ribosome-binding, repressing translation, binding elsewhere in the 5'-UTR can activate translation and/or stabilize the mRNA. Its function is antagonized by small RNA(s). The sequence is that of Translational regulator CsrA from Dichelobacter nodosus (strain VCS1703A).